Here is a 1004-residue protein sequence, read N- to C-terminus: Kinesin-like protein KIN-14R (1004 aa).

Disordered regions lie at residues 1–21 (MEEEGSGRGGDGPAAHGRIGD), 61–90 (PYVDDDDDGNSEEENSASSGILPCDGMQHD), and 110–169 (ELFS…ATMG). Over residues 63-75 (VDDDDDGNSEEEN) the composition is skewed to acidic residues. A compositionally biased stretch (pro residues) spans 115–125 (PSPPQGPPSPS). Coiled-coil stretches lie at residues 189–230 (CGQL…AQAS) and 266–338 (LNDL…LYNK). Residues 345–671 (NIRVFCRCRP…LNFASRVRGI (327 aa)) form the Kinesin motor domain. 428 to 435 (GQTGTGKT) is a binding site for ATP. Residues 691–742 (MAGRAKQDSKNKDAQIKSMEETIQSLEAKNKAKDLLTMNLQEKIKELEAQLL) are a coiled coil. Disordered regions lie at residues 759-791 (DHLHQQQQSKKPENSPCPTRSPMAERNLNSTAE) and 946-1004 (SGRR…RQLN). The segment covering 948–958 (RRAGAGVAGTT) has biased composition (low complexity). Over residues 995-1004 (NNGTSLRQLN) the composition is skewed to polar residues.

This sequence belongs to the TRAFAC class myosin-kinesin ATPase superfamily. Kinesin family. KIN-14 subfamily.

The chain is Kinesin-like protein KIN-14R from Oryza sativa subsp. japonica (Rice).